The following is a 190-amino-acid chain: dCTP deaminase, dUMP-forming (190 aa).

DCTP contacts are provided by residues K101–R106, D119, T127–E129, Q148, Y162, and Q174. E129 (proton donor/acceptor) is an active-site residue. The segment at P161–T190 is disordered. The span at Y171 to T190 shows a compositional bias: polar residues.

This sequence belongs to the dCTP deaminase family. Homotrimer.

It catalyses the reaction dCTP + 2 H2O = dUMP + NH4(+) + diphosphate. It participates in pyrimidine metabolism; dUMP biosynthesis; dUMP from dCTP: step 1/1. Functionally, bifunctional enzyme that catalyzes both the deamination of dCTP to dUTP and the hydrolysis of dUTP to dUMP without releasing the toxic dUTP intermediate. This is dCTP deaminase, dUMP-forming from Mycobacterium marinum (strain ATCC BAA-535 / M).